The sequence spans 428 residues: CinA-like protein (428 aa).

The protein belongs to the CinA family.

The polypeptide is CinA-like protein (Endomicrobium trichonymphae).